Here is a 156-residue protein sequence, read N- to C-terminus: Endogenous retrovirus group K member 8 Pro protein (156 aa).

The 76-residue stretch at 21–96 (FEGLVDTGAD…IPLNLWGRDL (76 aa)) folds into the Peptidase A2 domain. Residue aspartate 26 is part of the active site. The G-patch domain occupies 111 to 156 (YSPTSQKIMTKRGYIPGKGLGKNEDGIKIPFEAKINQKREGIGYPF).

The protein belongs to the peptidase A2 family. HERV class-II K(HML-2) subfamily. Active as a homodimer. Autoproteolytically processed at the N-terminus. Expected C-terminal autoprocessing not detected. The sequence shown is that of the processed Pro protein.

The catalysed reaction is Processing at the authentic HIV-1 PR recognition site and release of the mature p17 matrix and the p24 capsid protein, as a result of the cleavage of the -SQNY-|-PIVQ- cleavage site.. Functionally, retroviral proteases have roles in the processing of the primary translation products and the maturation of the viral particle. Endogenous Pro proteins may have kept, lost or modified their original function during evolution. The chain is Endogenous retrovirus group K member 8 Pro protein (ERVK-8) from Homo sapiens (Human).